We begin with the raw amino-acid sequence, 234 residues long: ATP-dependent dethiobiotin synthetase BioD (234 aa).

Residue 12–17 (GAGKTI) coordinates ATP. Position 16 (Thr-16) interacts with Mg(2+). The active site involves Lys-39. Residue Thr-43 participates in substrate binding. Residues Asp-47, 108-111 (EGLG), 168-169 (SC), and 200-202 (PYL) contribute to the ATP site. Mg(2+) is bound by residues Asp-47 and Glu-108.

The protein belongs to the dethiobiotin synthetase family. As to quaternary structure, homodimer. Requires Mg(2+) as cofactor.

The protein localises to the cytoplasm. It catalyses the reaction (7R,8S)-7,8-diammoniononanoate + CO2 + ATP = (4R,5S)-dethiobiotin + ADP + phosphate + 3 H(+). The enzyme catalyses (7R,8S)-8-amino-7-(carboxyamino)nonanoate + ATP = (4R,5S)-dethiobiotin + ADP + phosphate + H(+). The protein operates within cofactor biosynthesis; biotin biosynthesis; biotin from 7,8-diaminononanoate: step 1/2. Catalyzes a mechanistically unusual reaction, the ATP-dependent insertion of CO2 between the N7 and N8 nitrogen atoms of 7,8-diaminopelargonic acid (DAPA, also called 7,8-diammoniononanoate) to form a ureido ring. This cyanobacterium does not encode bioA (which catalyzes the formation of the precursor for this reaction in the cannonical pathway), instead it encodes bioU, which replaces bioA and also performs the first half of the cannonical BioD reaction. Thus in this organism BioD has a different substrate. The protein is ATP-dependent dethiobiotin synthetase BioD of Rippkaea orientalis (strain PCC 8801 / RF-1) (Cyanothece sp. (strain PCC 8801)).